The primary structure comprises 105 residues: SAGA-associated factor 11 (105 aa).

The SGF11-type zinc finger occupies 76-97 (FRCPNCSRDLSANRFAAHLERC).

This sequence belongs to the SGF11 family. As to quaternary structure, component of the 1.8 MDa SAGA transcription coactivator-HAT complex. SAGA is built of 5 distinct domains with specialized functions. Within the SAGA complex, SUS1, SGF11, SGF73 and UBP8 form an additional subcomplex of SAGA called the DUB module (deubiquitination module). Interacts directly with SGF73, SUS1 and UBP8.

The protein localises to the nucleus. Its function is as follows. Functions as a component of the transcription regulatory histone acetylation (HAT) complex SAGA. At the promoters, SAGA is required for recruitment of the basal transcription machinery. It influences RNA polymerase II transcriptional activity through different activities such as TBP interaction and promoter selectivity, interaction with transcription activators, and chromatin modification through histone acetylation and deubiquitination. SAGA acetylates nucleosomal histone H3 to some extent (to form H3K9ac, H3K14ac, H3K18ac and H3K23ac). SAGA interacts with DNA via upstream activating sequences (UASs). Involved in transcriptional regulation of a subset of SAGA-regulated genes. Within the SAGA complex, participates in a subcomplex, that specifically deubiquitinates histones H2B. The polypeptide is SAGA-associated factor 11 (Eremothecium gossypii (strain ATCC 10895 / CBS 109.51 / FGSC 9923 / NRRL Y-1056) (Yeast)).